A 313-amino-acid chain; its full sequence is D-alanine--D-alanine ligase (313 aa).

The ATP-grasp domain maps to 107–303 (KQAFAAAGLT…FEALVEQIAC (197 aa)). 135 to 188 (PFGLPVVVKPVQEGSSVGVTIVKKPEDLQAALDEAFRYDTLVLVEKYIKGQEVQ) lines the ATP pocket. Positions 256, 269, and 271 each coordinate Mg(2+).

It belongs to the D-alanine--D-alanine ligase family. The cofactor is Mg(2+). Requires Mn(2+) as cofactor.

The protein resides in the cytoplasm. It catalyses the reaction 2 D-alanine + ATP = D-alanyl-D-alanine + ADP + phosphate + H(+). It functions in the pathway cell wall biogenesis; peptidoglycan biosynthesis. Cell wall formation. The polypeptide is D-alanine--D-alanine ligase (Trichlorobacter lovleyi (strain ATCC BAA-1151 / DSM 17278 / SZ) (Geobacter lovleyi)).